Consider the following 739-residue polypeptide: Polyribonucleotide nucleotidyltransferase (739 aa).

Residues aspartate 488 and aspartate 494 each coordinate Mg(2+). The KH domain maps to 555–614 (PKIVTLKINPDKIRDVIGPGGKVINGIIDETGVKIDIDQDGTVFIASTDQDGINHARQLI). The 69-residue stretch at 624–692 (GEEFDGTVRR…DKGRVNASHK (69 aa)) folds into the S1 motif domain. Residues 698 to 739 (GMSPEDRAAYDEKKKTERDSRPPRRDTGSRPPRDGQRPPRRN) are disordered. Residues 701 to 739 (PEDRAAYDEKKKTERDSRPPRRDTGSRPPRDGQRPPRRN) are compositionally biased toward basic and acidic residues.

The protein belongs to the polyribonucleotide nucleotidyltransferase family. Requires Mg(2+) as cofactor.

Its subcellular location is the cytoplasm. It carries out the reaction RNA(n+1) + phosphate = RNA(n) + a ribonucleoside 5'-diphosphate. In terms of biological role, involved in mRNA degradation. Catalyzes the phosphorolysis of single-stranded polyribonucleotides processively in the 3'- to 5'-direction. This chain is Polyribonucleotide nucleotidyltransferase, found in Exiguobacterium sibiricum (strain DSM 17290 / CCUG 55495 / CIP 109462 / JCM 13490 / 255-15).